The primary structure comprises 97 residues: YcgL domain-containing protein CPS_3517 (97 aa).

One can recognise a YcgL domain in the interval 1 to 85; it reads MLCAIYKSAR…PQEDLLKEHK (85 aa).

The protein is YcgL domain-containing protein CPS_3517 of Colwellia psychrerythraea (strain 34H / ATCC BAA-681) (Vibrio psychroerythus).